The sequence spans 1088 residues: Protocadherin-19 (1088 aa).

The signal sequence occupies residues 1–24 (MHSKDMDFVQMFVCFLLCWTGVDA). At 25 to 678 (VFNLKYTVEE…QEQIGPVNLS (654 aa)) the chain is on the extracellular side. Cadherin domains follow at residues 31 to 130 (TVEE…APRF), 131 to 239 (PTNH…NPVF), 240 to 347 (DEPV…APEI), 351 to 454 (SENS…PPYF), 455 to 563 (TKPH…TPVM), and 569 to 676 (VNGT…GPVN). Ca(2+) contacts are provided by E34 and E35. N44 is a glycosylation site (N-linked (GlcNAc...) asparagine). Residues D89 and D91 each coordinate Ca(2+). C94 and C100 form a disulfide bridge. D122, V123, N124, D125, N126, E141, D156, D158, N162, E200, D213, D231, S232, N233, D234, N235, and E250 together coordinate Ca(2+). Residue N262 is glycosylated (N-linked (GlcNAc...) asparagine). Ca(2+)-binding residues include D265, D267, and N271. N-linked (GlcNAc...) asparagine glycosylation occurs at N284. Residues D306, E308, D339, I340, N341, D342, N343, E361, and D376 each coordinate Ca(2+). N377 is a glycosylation site (N-linked (GlcNAc...) asparagine). Residues D378, N382, D413, and E415 each coordinate Ca(2+). N421 carries an N-linked (GlcNAc...) asparagine glycan. Ca(2+) is bound by residues D428, D446, E447, N448, D449, N450, E465, D480, D482, N486, N522, E524, and D537. An N-linked (GlcNAc...) asparagine glycan is attached at N486. N546 carries N-linked (GlcNAc...) asparagine glycosylation. Ca(2+)-binding residues include D555, V556, N557, D558, and N559. A glycan (N-linked (GlcNAc...) asparagine) is linked at N570. Residues D594, D596, N600, and D646 each coordinate Ca(2+). N676 is a glycosylation site (N-linked (GlcNAc...) asparagine). The chain crosses the membrane as a helical span at residues 679–699 (LIFIIALGSIAVILFVTMIFV). The Cytoplasmic segment spans residues 700–1088 (AVKCKRDNKE…GSKRLKDIVL (389 aa)). Disordered stretches follow at residues 792–813 (NSRN…GPQQ), 851–875 (DMEG…HDVQ), 970–1032 (TFGK…ASST), and 1067–1088 (TLLQ…DIVL). Over residues 859 to 875 (DSGHEESDQTDSEHDVQ) the composition is skewed to basic and acidic residues. A compositionally biased stretch (basic and acidic residues) spans 1071 to 1088 (DGRDKESPGSKRLKDIVL).

In terms of assembly, homodimer; antiparallel. Interacts with cadherin cdh2; the interaction confers robust cell adhesion activity on pcdh19. As to expression, in the embryo, strongly expressed in the developing nervous system. At 12 hours post fertilization (hpf), shows a segmental expression pattern in the anterior third of the neural keel with strong expression in the presumptive forebrain, cerebellum/rhombomere 1 and rhombomere 4. By 24 hpf, expressed widely in the brain and spinal cord with higher expression levels in the ventral telencephalon, dorsal and central thalamus, optic tectum, central tegmentum, cerebellum and dorsolateral regions of the hindbrain. As development proceeds, expression becomes restricted to the dorsal and/or lateral regions of the central nervous system. Not detected in the spinal cord of two- and three-day old embryos. Expressed in the eye primordium, developing retina, lens and otic vesicle. Expressed in the larval optic tectum at 4 days post-fertilization where it localizes in discrete columns of neurons. Expressed throughout the adult brain with strong expression in the ventromedial telencephalon, periventricular regions of the thalamus and anterior hypothalamus, stratum periventriculare of the optic tectum, dorsal tegmental nucleus, granular regions of the cerebellar body and valvula, and superficial layers of the facial and vagal lobes.

It localises to the cell membrane. Its function is as follows. Calcium-dependent cell-adhesion protein. Essential for the early stages of neurulation in the anterior neural plate. Shows little cell adhesion activity on its own but exhibits robust homophilic cell adhesion when in a complex with cadherin cdh2 and appears to mediate the adhesion while cdh2 acts as a cell adhesion cofactor in the complex. Functions with cdh2 to coordinate cell adhesion and cell movements during neurulation. Contributes to neural progenitor cell patterning with cdh2 by promoting homophilic cell interactions. Regulates the columnar organization of neurons in the optic tectum. This chain is Protocadherin-19, found in Danio rerio (Zebrafish).